The sequence spans 285 residues: Ribosomal RNA small subunit methyltransferase I (285 aa).

It belongs to the methyltransferase superfamily. RsmI family.

The protein resides in the cytoplasm. The enzyme catalyses cytidine(1402) in 16S rRNA + S-adenosyl-L-methionine = 2'-O-methylcytidine(1402) in 16S rRNA + S-adenosyl-L-homocysteine + H(+). Functionally, catalyzes the 2'-O-methylation of the ribose of cytidine 1402 (C1402) in 16S rRNA. This is Ribosomal RNA small subunit methyltransferase I from Mycobacterium tuberculosis (strain ATCC 25618 / H37Rv).